A 248-amino-acid chain; its full sequence is Probable transcriptional regulatory protein Nwi_2729 (248 aa).

The interval 1–21 (MAGHSQFKNIMHRKGRQDAQK) is disordered.

Belongs to the TACO1 family.

The protein localises to the cytoplasm. In Nitrobacter winogradskyi (strain ATCC 25391 / DSM 10237 / CIP 104748 / NCIMB 11846 / Nb-255), this protein is Probable transcriptional regulatory protein Nwi_2729.